The sequence spans 159 residues: 3-hydroxyacyl-[acyl-carrier-protein] dehydratase FabZ (159 aa).

His-58 is an active-site residue.

It belongs to the thioester dehydratase family. FabZ subfamily.

It localises to the cytoplasm. It carries out the reaction a (3R)-hydroxyacyl-[ACP] = a (2E)-enoyl-[ACP] + H2O. Its function is as follows. Involved in unsaturated fatty acids biosynthesis. Catalyzes the dehydration of short chain beta-hydroxyacyl-ACPs and long chain saturated and unsaturated beta-hydroxyacyl-ACPs. This chain is 3-hydroxyacyl-[acyl-carrier-protein] dehydratase FabZ, found in Helicobacter pylori (strain HPAG1).